The primary structure comprises 154 residues: uncharacterized protein (154 aa).

It localises to the mitochondrion. This is an uncharacterized protein from Marchantia polymorpha (Common liverwort).